Here is a 401-residue protein sequence, read N- to C-terminus: Nicotinate phosphoribosyltransferase (401 aa).

H221 is modified (phosphohistidine; by autocatalysis).

Belongs to the NAPRTase family. Transiently phosphorylated on a His residue during the reaction cycle. Phosphorylation strongly increases the affinity for substrates and increases the rate of nicotinate D-ribonucleotide production. Dephosphorylation regenerates the low-affinity form of the enzyme, leading to product release.

It catalyses the reaction nicotinate + 5-phospho-alpha-D-ribose 1-diphosphate + ATP + H2O = nicotinate beta-D-ribonucleotide + ADP + phosphate + diphosphate. It functions in the pathway cofactor biosynthesis; NAD(+) biosynthesis; nicotinate D-ribonucleotide from nicotinate: step 1/1. In terms of biological role, catalyzes the synthesis of beta-nicotinate D-ribonucleotide from nicotinate and 5-phospho-D-ribose 1-phosphate at the expense of ATP. The polypeptide is Nicotinate phosphoribosyltransferase (Pectobacterium atrosepticum (strain SCRI 1043 / ATCC BAA-672) (Erwinia carotovora subsp. atroseptica)).